Reading from the N-terminus, the 180-residue chain is Inner membrane-spanning protein YciB (180 aa).

The next 5 helical transmembrane spans lie at 22–42 (IFVA…FTWF), 50–70 (MTLV…AFHS), 72–92 (LFIK…LLVS), 121–141 (MSWA…AFWL), and 149–169 (FKVF…GVYI).

Belongs to the YciB family.

Its subcellular location is the cell inner membrane. In terms of biological role, plays a role in cell envelope biogenesis, maintenance of cell envelope integrity and membrane homeostasis. In Yersinia enterocolitica serotype O:8 / biotype 1B (strain NCTC 13174 / 8081), this protein is Inner membrane-spanning protein YciB.